Here is a 500-residue protein sequence, read N- to C-terminus: Protein FAM114A2 (500 aa).

The interval 1-82 is disordered; that stretch reads MSNKDDLETA…AAGKETVSKD (82 aa). Phosphoserine is present on residues S93, S152, and S215.

Belongs to the FAM114 family.

This Bos taurus (Bovine) protein is Protein FAM114A2 (FAM114A1).